Reading from the N-terminus, the 310-residue chain is tRNA dimethylallyltransferase (310 aa).

13–20 (GPTASGKT) serves as a coordination point for ATP. 15 to 20 (TASGKT) serves as a coordination point for substrate. Interaction with substrate tRNA stretches follow at residues 38-41 (DSAL), 162-166 (QRLSR), 243-248 (RCVGYR), and 276-283 (KRQITWLR).

This sequence belongs to the IPP transferase family. In terms of assembly, monomer. Mg(2+) serves as cofactor.

It catalyses the reaction adenosine(37) in tRNA + dimethylallyl diphosphate = N(6)-dimethylallyladenosine(37) in tRNA + diphosphate. In terms of biological role, catalyzes the transfer of a dimethylallyl group onto the adenine at position 37 in tRNAs that read codons beginning with uridine, leading to the formation of N6-(dimethylallyl)adenosine (i(6)A). In Vibrio campbellii (strain ATCC BAA-1116), this protein is tRNA dimethylallyltransferase.